We begin with the raw amino-acid sequence, 319 residues long: uncharacterized protein (319 aa).

The first 23 residues, 1–23 (MFPFRRNVLAFAALLALSSPVLA), serve as a signal peptide directing secretion.

It to H.influenzae HI_0755.

This is an uncharacterized protein from Escherichia coli (strain K12).